A 428-amino-acid polypeptide reads, in one-letter code: MKTSLFKSLYFQVLTAIAIGILLGHFYPEIGEQMKPLGDGFVKLIKMIIAPVIFCTVVTGIAGMESMKAVGRTGAVALLYFEIVSTIALIIGLIIVNVVQPGAGMNVDPATLDAKAVAVYADQAKDQGIVAFIMDVIPASVIGAFASGNILQVLLFAVLFGFALHRLGSKGQLIFNVIESFSQVIFGIINMIMRLAPIGAFGAMAFTIGKYGVGTLVQLGQLIICFYITCILFVVLVLGSIAKATGFSIFKFIRYIREELLIVLGTSSSESALPRMLDKMEKLGCRKSVVGLVIPTGYSFNLDGTSIYLTMAAVFIAQATNSQMDIVHQITLLIVLLLSSKGAAGVTGSGFIVLAATLSAVGHLPVAGLALILGIDRFMSEARALTNLVGNGVATIVVAKWVKELDHKKLDDALNNRAPDGKTHELSS.

8 consecutive transmembrane segments (helical) span residues 5 to 27 (LFKS…GHFY), 47 to 64 (MIIA…IAGM), 77 to 99 (ALLY…VNVV), 141 to 163 (VIGA…FGFA), 184 to 206 (VIFG…AMAF), 219 to 241 (LGQL…LGSI), 326 to 348 (IVHQ…GVTG), and 352 to 374 (IVLA…LILG).

It belongs to the dicarboxylate/amino acid:cation symporter (DAACS) (TC 2.A.23) family.

Its subcellular location is the cell inner membrane. In terms of biological role, responsible for the aerobic transport of the dicarboxylates fumarate and malate and to a lesser extent succinate, from the periplasm across the inner membrane. The sequence is that of Aerobic C4-dicarboxylate transport protein from Escherichia coli O157:H7.